We begin with the raw amino-acid sequence, 122 residues long: Ribonuclease P protein component (122 aa).

This sequence belongs to the RnpA family. In terms of assembly, consists of a catalytic RNA component (M1 or rnpB) and a protein subunit.

It catalyses the reaction Endonucleolytic cleavage of RNA, removing 5'-extranucleotides from tRNA precursor.. In terms of biological role, RNaseP catalyzes the removal of the 5'-leader sequence from pre-tRNA to produce the mature 5'-terminus. It can also cleave other RNA substrates such as 4.5S RNA. The protein component plays an auxiliary but essential role in vivo by binding to the 5'-leader sequence and broadening the substrate specificity of the ribozyme. This is Ribonuclease P protein component from Shouchella clausii (strain KSM-K16) (Alkalihalobacillus clausii).